The following is a 182-amino-acid chain: Isopentenyl-diphosphate Delta-isomerase (182 aa).

Mn(2+)-binding residues include His25 and His32. The 135-residue stretch at 30–164 (LLHLAFSSWL…PWAFSPWMVM (135 aa)) folds into the Nudix hydrolase domain. Cys67 is an active-site residue. His69 is a Mn(2+) binding site. Residue Glu87 participates in Mg(2+) binding. Mn(2+)-binding residues include Glu114 and Glu116. Glu116 is a catalytic residue.

It belongs to the IPP isomerase type 1 family. In terms of assembly, homodimer. Requires Mg(2+) as cofactor. It depends on Mn(2+) as a cofactor.

The protein localises to the cytoplasm. It carries out the reaction isopentenyl diphosphate = dimethylallyl diphosphate. It participates in isoprenoid biosynthesis; dimethylallyl diphosphate biosynthesis; dimethylallyl diphosphate from isopentenyl diphosphate: step 1/1. Catalyzes the 1,3-allylic rearrangement of the homoallylic substrate isopentenyl (IPP) to its highly electrophilic allylic isomer, dimethylallyl diphosphate (DMAPP). This is Isopentenyl-diphosphate Delta-isomerase from Escherichia coli O127:H6 (strain E2348/69 / EPEC).